The following is a 606-amino-acid chain: Cryptochrome-1 (606 aa).

In terms of domain architecture, Photolyase/cryptochrome alpha/beta spans 3–132 (VNAVHWFRKG…EVIVRISHTL (130 aa)). Residue Lys-11 forms a Glycyl lysine isopeptide (Lys-Gly) (interchain with G-Cter in ubiquitin) linkage. Residues 50–54 (NRWRF) carry the LIR 1 motif. Ser-71 is modified (phosphoserine; by AMPK). An LIR 2 motif is present at residues 82–87 (DVFPRL). Residue Lys-107 forms a Glycyl lysine isopeptide (Lys-Gly) (interchain with G-Cter in ubiquitin) linkage. Positions 151-156 (KRFQTL) match the LIR 3 motif. Residue Lys-159 forms a Glycyl lysine isopeptide (Lys-Gly) (interchain with G-Cter in ubiquitin) linkage. Ser-247 bears the Phosphoserine; by MAPK mark. Residue Ser-252 coordinates FAD. 2 short sequence motifs (LIR) span residues 255–260 (LRFGCL) and 271–276 (DLYKKV). Phosphoserine; by AMPK is present on Ser-280. The LIR 6 motif lies at 285-290 (SLYGQL). Gln-289 serves as a coordination point for FAD. A Glycyl lysine isopeptide (Lys-Gly) (interchain with G-Cter in ubiquitin) cross-link involves residue Lys-329. The short motif at 335-339 (TGFPW) is the LIR 7 element. His-355 provides a ligand contact to FAD. The required for inhibition of CLOCK-BMAL1-mediated transcription stretch occupies residues 371–470 (WISWEEGMKV…LIGVNYPKPM (100 aa)). The short motif at 379–384 (KVFEEL) is the LIR 8 element. Residue 387–389 (DAD) participates in FAD binding. 3 consecutive short sequence motifs (LIR) follow at residues 395-400 (GSWMWL), 411-416 (HCYCPV), and 430-435 (RRYLPV). The segment at 471–493 (VNHAEASRLNIERMKQIYQQLSR) is interaction with TIMELESS. Residue Lys-485 forms a Glycyl lysine isopeptide (Lys-Gly) (interchain with G-Cter in ubiquitin) linkage. Short sequence motifs (LIR) lie at residues 486-491 (QIYQQL) and 492-497 (SRYRGL). Positions 559 to 606 (YAHGDSQQTHSLKQGRSSAGTGLSSGKRPSQEEDAQSVGPKVQRQSSN) are disordered. The span at 563-586 (DSQQTHSLKQGRSSAGTGLSSGKR) shows a compositional bias: polar residues. Lys-585 is covalently cross-linked (Glycyl lysine isopeptide (Lys-Gly) (interchain with G-Cter in ubiquitin)). Residue Ser-588 is modified to Phosphoserine.

This sequence belongs to the DNA photolyase class-1 family. As to quaternary structure, component of the circadian core oscillator, which includes the CRY proteins, CLOCK or NPAS2, BMAL1 or BMAL2, CSNK1D and/or CSNK1E, TIMELESS, and the PER proteins. Interacts directly with TIMELESS. Interacts directly with PER1 and PER2; interaction with PER2 inhibits its ubiquitination and vice versa. Interacts with PER3. Interacts with FBXL21. Interacts with FBXL3. Interacts with PPP5C (via TPR repeats). Interacts with CLOCK-BMAL1 independently of PER2 and DNA. Interacts with HDAC1, HDAC2 and SIN3B. Interacts with nuclear receptors AR, NR1D1, NR3C1/GR, RORA and RORC; the interaction with at least NR3C1/GR is ligand dependent. Interacts with PRKDC. Interacts with the G protein subunit alpha GNAS; the interaction may block GPCR-mediated regulation of cAMP concentrations. Interacts with PRMT5. Interacts with EZH2. Interacts with MYBBP1A, DOCK7, HNRNPU, RPL7A, RPL8 and RPS3. Interacts with MAP1LC3B. Interacts with CLOCK. Interacts with BMAL1. Interacts weakly with HDAC3; this interaction is enhanced in the presence of FBXL3. Interacts with TRIM28, KCTD5 and DDB1. Interacts with DTL. Interacts with DDB1-CUL4A complex. Interacts with FOXO1. Interacts with PSMD2 in a KDM8-dependent manner. Interacts with KDM8 in a FBXL3-dependent manner. Interacts with PPARA. Interacts with PPARG in a ligand-dependent manner. Interacts with PPARD (via domain NR LBD) in a ligand-dependent manner. Interacts with NR1I2 (via domain NR LBD) in a ligand-dependent manner. Interacts with NR1I3, VDR and HNF4A. FAD serves as cofactor. Requires (6R)-5,10-methylene-5,6,7,8-tetrahydrofolate as cofactor. Post-translationally, phosphorylation on Ser-247 by MAPK is important for the inhibition of CLOCK-BMAL1-mediated transcriptional activity. Phosphorylation by CSNK1E requires interaction with PER1 or PER2. Phosphorylation at Ser-71 and Ser-280 by AMPK decreases protein stability. Phosphorylation at Ser-588 exhibits a robust circadian rhythm with a peak at CT8, increases protein stability, prevents SCF(FBXL3)-mediated degradation and is antagonized by interaction with PRKDC. In terms of processing, ubiquitinated by the SCF(FBXL3) and SCF(FBXL21) complexes, regulating the balance between degradation and stabilization. The SCF(FBXL3) complex is mainly nuclear and mediates ubiquitination and subsequent degradation of CRY1. In contrast, cytoplasmic SCF(FBXL21) complex-mediated ubiquitination leads to stabilize CRY1 and counteract the activity of the SCF(FBXL3) complex. The SCF(FBXL3) and SCF(FBXL21) complexes probably mediate ubiquitination at different Lys residues. Ubiquitination at Lys-11 and Lys-107 are specifically ubiquitinated by the SCF(FBXL21) complex but not by the SCF(FBXL3) complex. Ubiquitination may be inhibited by PER2. Deubiquitinated by USP7. Undergoes autophagy-mediated degradation in the liver in a time-dependent manner. Autophagic degradation of CRY1 (an inhibitor of gluconeogenesis) occurs during periods of reduced feeding allowing induction of gluconeogenesis and maintenance of blood glucose levels. In terms of tissue distribution, expressed in cones, amacrine cells, and retinal ganglion cells of the retina (at protein level). Expressed in all tissues examined including heart, brain, spleen, lung, liver, skeletal muscle, kidney and testis. Higher levels in brain, liver and testis. In the retina, highly expressed in the ganglion cell layer (GCL) and in the inner nuclear layer (INL). Evenly distributed in central and peripheral retina. In the brain, highly expressed in the suprachiasmatic nucleus (SCN). High levels in cerebral cortical layers particularly in the pyramidial cell layer of the hippocampus, the granular cell layer of the dentate gyrus (DG) and the pyramidal cell layer of the piriform cortex (PFC).

It is found in the cytoplasm. The protein resides in the nucleus. Its activity is regulated as follows. KL001 (N-[3-(9H-carbazol-9-yl)-2-hydroxypropyl]-N-(2-furanylmethyl)-methanesulfonamide) binds to CRY1 and stabilizes it by inhibiting FBXL3- and ubiquitin-dependent degradation of CRY1 resulting in lengthening of the circadian periods. KL001-mediated CRY1 stabilization can inhibit glucagon-induced gluconeogenesis in primary hepatocytes. Its function is as follows. Transcriptional repressor which forms a core component of the circadian clock. The circadian clock, an internal time-keeping system, regulates various physiological processes through the generation of approximately 24 hour circadian rhythms in gene expression, which are translated into rhythms in metabolism and behavior. It is derived from the Latin roots 'circa' (about) and 'diem' (day) and acts as an important regulator of a wide array of physiological functions including metabolism, sleep, body temperature, blood pressure, endocrine, immune, cardiovascular, and renal function. Consists of two major components: the central clock, residing in the suprachiasmatic nucleus (SCN) of the brain, and the peripheral clocks that are present in nearly every tissue and organ system. Both the central and peripheral clocks can be reset by environmental cues, also known as Zeitgebers (German for 'timegivers'). The predominant Zeitgeber for the central clock is light, which is sensed by retina and signals directly to the SCN. The central clock entrains the peripheral clocks through neuronal and hormonal signals, body temperature and feeding-related cues, aligning all clocks with the external light/dark cycle. Circadian rhythms allow an organism to achieve temporal homeostasis with its environment at the molecular level by regulating gene expression to create a peak of protein expression once every 24 hours to control when a particular physiological process is most active with respect to the solar day. Transcription and translation of core clock components (CLOCK, NPAS2, BMAL1, BMAL2, PER1, PER2, PER3, CRY1 and CRY2) plays a critical role in rhythm generation, whereas delays imposed by post-translational modifications (PTMs) are important for determining the period (tau) of the rhythms (tau refers to the period of a rhythm and is the length, in time, of one complete cycle). A diurnal rhythm is synchronized with the day/night cycle, while the ultradian and infradian rhythms have a period shorter and longer than 24 hours, respectively. Disruptions in the circadian rhythms contribute to the pathology of cardiovascular diseases, cancer, metabolic syndromes and aging. A transcription/translation feedback loop (TTFL) forms the core of the molecular circadian clock mechanism. Transcription factors, CLOCK or NPAS2 and BMAL1 or BMAL2, form the positive limb of the feedback loop, act in the form of a heterodimer and activate the transcription of core clock genes and clock-controlled genes (involved in key metabolic processes), harboring E-box elements (5'-CACGTG-3') within their promoters. The core clock genes: PER1/2/3 and CRY1/2 which are transcriptional repressors form the negative limb of the feedback loop and interact with the CLOCK|NPAS2-BMAL1|BMAL2 heterodimer inhibiting its activity and thereby negatively regulating their own expression. This heterodimer also activates nuclear receptors NR1D1/2 and RORA/B/G, which form a second feedback loop and which activate and repress BMAL1 transcription, respectively. CRY1 and CRY2 have redundant functions but also differential and selective contributions at least in defining the pace of the SCN circadian clock and its circadian transcriptional outputs. More potent transcriptional repressor in cerebellum and liver than CRY2, though more effective in lengthening the period of the SCN oscillator. On its side, CRY2 seems to play a critical role in tuning SCN circadian period by opposing the action of CRY1. With CRY2, is dispensable for circadian rhythm generation but necessary for the development of intercellular networks for rhythm synchrony. Capable of translocating circadian clock core proteins such as PER proteins to the nucleus. Interacts with CLOCK-BMAL1 independently of PER proteins and is found at CLOCK-BMAL1-bound sites, suggesting that CRY may act as a molecular gatekeeper to maintain CLOCK-BMAL1 in a poised and repressed state until the proper time for transcriptional activation. Represses the CLOCK-BMAL1 induced transcription of BHLHE40/DEC1, ATF4, MTA1, KLF10 and NAMPT. May repress circadian target genes expression in collaboration with HDAC1 and HDAC2 through histone deacetylation. Mediates the clock-control activation of ATR and modulates ATR-mediated DNA damage checkpoint. In liver, mediates circadian regulation of cAMP signaling and gluconeogenesis by binding to membrane-coupled G proteins and blocking glucagon-mediated increases in intracellular cAMP concentrations and CREB1 phosphorylation. Inhibits hepatic gluconeogenesis by decreasing nuclear FOXO1 levels that down-regulates gluconeogenic gene expression. Besides its role in the maintenance of the circadian clock, is also involved in the regulation of other processes. Represses glucocorticoid receptor NR3C1/GR-induced transcriptional activity by binding to glucocorticoid response elements (GREs). Plays a key role in glucose and lipid metabolism modulation, in part, through the transcriptional regulation of genes involved in these pathways, such as LEP or ACSL4. Represses PPARD and its target genes in the skeletal muscle and limits exercise capacity. Plays an essential role in the generation of circadian rhythms in the retina. Represses the transcriptional activity of NR1I2. This Mus musculus (Mouse) protein is Cryptochrome-1 (Cry1).